The following is an 88-amino-acid chain: Large ribosomal subunit protein eL37 (88 aa).

Zn(2+)-binding residues include Cys17, Cys20, Cys32, and Cys35. Residues 17 to 35 (CNRCGRRSFHVQKKTCSSC) form a C4-type zinc finger.

The protein belongs to the eukaryotic ribosomal protein eL37 family. The cofactor is Zn(2+).

Binds to the 23S rRNA. This Candida albicans (Yeast) protein is Large ribosomal subunit protein eL37 (RPL37).